A 313-amino-acid polypeptide reads, in one-letter code: Porphobilinogen deaminase (313 aa).

Cys-242 is subject to S-(dipyrrolylmethanemethyl)cysteine.

It belongs to the HMBS family. Monomer. It depends on dipyrromethane as a cofactor.

The catalysed reaction is 4 porphobilinogen + H2O = hydroxymethylbilane + 4 NH4(+). It participates in porphyrin-containing compound metabolism; protoporphyrin-IX biosynthesis; coproporphyrinogen-III from 5-aminolevulinate: step 2/4. Its function is as follows. Tetrapolymerization of the monopyrrole PBG into the hydroxymethylbilane pre-uroporphyrinogen in several discrete steps. The protein is Porphobilinogen deaminase of Pseudomonas putida (strain ATCC 47054 / DSM 6125 / CFBP 8728 / NCIMB 11950 / KT2440).